The primary structure comprises 63 residues: Conotoxin Cal12.5 (63 aa).

Positions 1–21 (MKVTCVLVVLLLLLPYGDLLG) are cleaved as a signal peptide.

This sequence belongs to the conotoxin O1 superfamily. In terms of processing, contains 4 disulfide bonds. Expressed by the venom duct.

The protein localises to the secreted. Its function is as follows. Probable neurotoxin. This chain is Conotoxin Cal12.5, found in Californiconus californicus (California cone).